Consider the following 364-residue polypeptide: Formimidoylglutamase (364 aa).

Residues His133, Asp189, His191, Asp193, Asp286, and Asp288 each contribute to the Mn(2+) site.

The protein belongs to the arginase family. It depends on Mn(2+) as a cofactor.

It catalyses the reaction N-formimidoyl-L-glutamate + H2O = formamide + L-glutamate. The protein operates within amino-acid degradation; L-histidine degradation into L-glutamate; L-glutamate from N-formimidoyl-L-glutamate (hydrolase route): step 1/1. Catalyzes the conversion of N-formimidoyl-L-glutamate to L-glutamate and formamide. The sequence is that of Formimidoylglutamase from Photobacterium profundum (strain SS9).